A 74-amino-acid chain; its full sequence is Cytochrome c oxidase copper chaperone 1 (74 aa).

A disordered region spans residues 1-30 (MTDQPAQNGLIPPPTSEPSKAAASAETKPK). Cu cation-binding residues include Cys-34 and Cys-35. The 41-residue stretch at 34 to 74 (CCACPDTKKLRDECIVEHGESACTKWIEAHKICLRAEGFNV) folds into the CHCH domain. Short sequence motifs (cx9C motif) lie at residues 37–47 (CPDTKKLRDEC) and 56–66 (CTKWIEAHKIC). 2 disulfides stabilise this stretch: Cys-37–Cys-66 and Cys-47–Cys-56.

This sequence belongs to the COX17 family.

Its subcellular location is the mitochondrion intermembrane space. In terms of biological role, copper chaperone for cytochrome c oxidase (COX). Binds 2 copper ions and delivers them to the Cu(A) site of COX. Can complement the yeast mutant cox17. The sequence is that of Cytochrome c oxidase copper chaperone 1 (COX17-1) from Arabidopsis thaliana (Mouse-ear cress).